We begin with the raw amino-acid sequence, 724 residues long: NAD(+) hydrolase SARM1 (724 aa).

The N-terminal 27 residues, 1–27, are a transit peptide targeting the mitochondrion; it reads MVLTLLFSAYKLCRFFIMSGPRPGADR. The ARM 1 repeat unit spans residues 60-100; sequence EVQGALERSLPELQQALSELKQASAAQAVGAGLAEVFQLVE. NAD(+) contacts are provided by residues W103, R110, 149–157, and 190–193; these read EQILVAENR and HMFK. ARM repeat units lie at residues 114–153, 155–193, 196–235, 237–280, 281–314, 315–354, and 359–402; these read QGLC…QILV, ENRD…HMFK, EETC…NCAL, GGQT…LATN, KEVE…CLVD, ASDT…AEAA, and QGKT…EEVP. 2 SAM domains span residues 412–476 and 486–548; these read WKEA…LKTF and NLAD…MLHS. A phosphoserine mark is found at S548 and S558. Residues 560–703 enclose the TIR domain; it reads DTPDVFISYR…KIIRFLQGRP (144 aa). Residues 569–570 and E599 contribute to the NAD(+) site; that span reads RR. E642 is a catalytic residue. Over residues 703–717 the composition is skewed to polar residues; it reads PSQDSSAGSDTSLEG. Residues 703–724 are disordered; it reads PSQDSSAGSDTSLEGATSMGLP.

It belongs to the SARM1 family. As to quaternary structure, homooctamer; forms an octameric ring via SAM domains. Interacts with TICAM1/TRIF and thereby interferes with TICAM1/TRIF function. Interacts with MAPK10/JNK3 and SDC2 (via cytoplasmic domain). Phosphorylation at Ser-548 by JNK kinases (MAPK8, MAPK9 and /or MAPK10) enhance the NAD(+) hydrolase (NADase) activity. Phosphorylation at Ser-548 and subsequent activation takes place in response to oxidative stress conditions and inhibits mitochondrial respiration. Phosphorylation at Ser-548 increases in response to cerebral ischemia/reperfusion (I/R) injury.

Its subcellular location is the cytoplasm. It is found in the cell projection. The protein localises to the axon. It localises to the dendrite. The protein resides in the synapse. Its subcellular location is the mitochondrion. It carries out the reaction NAD(+) + H2O = ADP-D-ribose + nicotinamide + H(+). The catalysed reaction is NAD(+) = cyclic ADP-beta-D-ribose + nicotinamide + H(+). The enzyme catalyses NADP(+) + H2O = ADP-D-ribose 2'-phosphate + nicotinamide + H(+). Its activity is regulated as follows. Autoinhibited: in the inactive state, the enzymatic TIR domain is held apart by the autoinhibiting ARM repeats. NAD(+)-binding to ARM repeats maintains an inactive state by promoting interaction between ARM repeats and the TIR domain, thereby facilitating inhibition of the enzymatic TIR domain. Following activation, possibly by nicotinamide mononucleotide (NMN), auto-inhibitory interactions are released, allowing self-association of the TIR domains and subsequent activation of the NAD(+) hydrolase (NADase) activity. Self-association of TIR domains is facilitated by the octamer of SAM domains. Its function is as follows. NAD(+) hydrolase, which plays a key role in axonal degeneration following injury by regulating NAD(+) metabolism. Acts as a negative regulator of MYD88- and TRIF-dependent toll-like receptor signaling pathway by promoting Wallerian degeneration, an injury-induced form of programmed subcellular death which involves degeneration of an axon distal to the injury site. Wallerian degeneration is triggered by NAD(+) depletion: in response to injury, SARM1 is activated and catalyzes cleavage of NAD(+) into ADP-D-ribose (ADPR), cyclic ADPR (cADPR) and nicotinamide; NAD(+) cleavage promoting cytoskeletal degradation and axon destruction. Also able to hydrolyze NADP(+), but not other NAD(+)-related molecules. Can activate neuronal cell death in response to stress. Regulates dendritic arborization through the MAPK4-JNK pathway. Involved in innate immune response: inhibits both TICAM1/TRIF- and MYD88-dependent activation of JUN/AP-1, TRIF-dependent activation of NF-kappa-B and IRF3, and the phosphorylation of MAPK14/p38. In Rattus norvegicus (Rat), this protein is NAD(+) hydrolase SARM1.